Reading from the N-terminus, the 499-residue chain is Glycerol kinase (499 aa).

Threonine 13 serves as a coordination point for ADP. 3 residues coordinate ATP: threonine 13, threonine 14, and serine 15. A sn-glycerol 3-phosphate-binding site is contributed by threonine 13. Arginine 17 lines the ADP pocket. Sn-glycerol 3-phosphate is bound by residues arginine 83, glutamate 84, tyrosine 135, and aspartate 245. Residues arginine 83, glutamate 84, tyrosine 135, aspartate 245, and glutamine 246 each contribute to the glycerol site. Residues threonine 267 and glycine 310 each contribute to the ADP site. Positions 267, 310, 314, and 411 each coordinate ATP. Residues glycine 411 and asparagine 415 each contribute to the ADP site.

This sequence belongs to the FGGY kinase family.

The enzyme catalyses glycerol + ATP = sn-glycerol 3-phosphate + ADP + H(+). The protein operates within polyol metabolism; glycerol degradation via glycerol kinase pathway; sn-glycerol 3-phosphate from glycerol: step 1/1. Its activity is regulated as follows. Inhibited by fructose 1,6-bisphosphate (FBP). Functionally, key enzyme in the regulation of glycerol uptake and metabolism. Catalyzes the phosphorylation of glycerol to yield sn-glycerol 3-phosphate. This Xanthomonas euvesicatoria pv. vesicatoria (strain 85-10) (Xanthomonas campestris pv. vesicatoria) protein is Glycerol kinase.